Reading from the N-terminus, the 254-residue chain is Sensory rhodopsin (254 aa).

Topologically, residues 1–4 (MTGA) are extracellular. The chain crosses the membrane as a helical span at residues 5-26 (VTSAYWLAAVAFLIGVGITAAL). Over 27 to 35 (YAKLEGSRA) the chain is Cytoplasmic. Residues 36 to 57 (RTRLAALAVIPGFAGLSYVGMA) form a helical membrane-spanning segment. Topologically, residues 58-71 (LGIGTVTVNGAELV) are extracellular. Residues 72 to 93 (GLRYVDWVVTTPLLVGFIGYNA) form a helical membrane-spanning segment. Over 94 to 96 (GAS) the chain is Cytoplasmic. The helical transmembrane segment at 97–119 (RRAIAGVMIADALMIVFGAAAVV) threads the bilayer. Over 120-123 (SGGT) the chain is Extracellular. The helical transmembrane segment at 124–151 (LKWALFGVSALFHVSLFAYLYVIFPGGI) threads the bilayer. Residues 152-154 (PDD) lie on the Cytoplasmic side of the membrane. The chain crosses the membrane as a helical span at residues 155–182 (PMQRGLFSLLKNHVGLLWLAYPFVWLMG). The Extracellular segment spans residues 183 to 190 (PAGIGFTG). Residues 191–223 (AVGAALTYAFLDVLAKVPYVYFFYARRQAFIDV) traverse the membrane as a helical segment. Lys-206 bears the N6-(retinylidene)lysine mark. Over 224–254 (TDSRAAAKGDGPAVGGEAPVATGDDAPTAAD) the chain is Cytoplasmic. Positions 231–254 (KGDGPAVGGEAPVATGDDAPTAAD) are disordered.

Belongs to the archaeal/bacterial/fungal opsin family.

It localises to the cell membrane. Involved in the control of phototaxis. The protein is Sensory rhodopsin (sop) of Halorubrum sodomense.